The sequence spans 405 residues: MSLVEISGSDAMAAPMPGRVPPPPPRPPPMPRRLPPMFDAFDHTGAGMVWGFPRPAKKRASLKPLHWVKITSDLQGSLWDELQRRHGDSQTAIELDISELETLFFVEAKPEKIRLHDLRRASYRVFNVINLSMPLPDMMTAVLAMDESVVDVDQIEKLIKFCPTNEEMELLKTYTGDKAALGKYEQYLLELMKVPRLEAKLRVFSFKTQFGTKITELKERLNVVTSACEENLLLIHQVRSSEKLKEIMKKIPCLGNTSNQGPDRGKTFLSPVEFKLDRLSVKRMHYFCKLKEIMKKIPCLGNTSKSNPRVGVKLDSSVSDTHTVKSMHYYCKVLASEASELLDVYKDLQSLESASKIQVKSLAQNIQAIIKRLEKLKQELTASETDGPASEVFCNVCWFFVRLMI.

The segment at 1–31 (MSLVEISGSDAMAAPMPGRVPPPPPRPPPMP) is disordered. Residues 18–31 (GRVPPPPPRPPPMP) show a composition bias toward pro residues. Residues 52 to 405 (FPRPAKKRAS…VCWFFVRLMI (354 aa)) form the FH2 domain.

This sequence belongs to the formin-like family. Class-II subfamily.

This Arabidopsis thaliana (Mouse-ear cress) protein is Formin-like protein 15a (FH15A).